The following is a 548-amino-acid chain: Glucose-6-phosphate isomerase 1 (548 aa).

Catalysis depends on glutamate 353, which acts as the Proton donor. Active-site residues include histidine 384 and lysine 512.

This sequence belongs to the GPI family.

Its subcellular location is the cytoplasm. The enzyme catalyses alpha-D-glucose 6-phosphate = beta-D-fructose 6-phosphate. The protein operates within carbohydrate biosynthesis; gluconeogenesis. Its pathway is carbohydrate degradation; glycolysis; D-glyceraldehyde 3-phosphate and glycerone phosphate from D-glucose: step 2/4. Functionally, catalyzes the reversible isomerization of glucose-6-phosphate to fructose-6-phosphate. The chain is Glucose-6-phosphate isomerase 1 from Neisseria meningitidis serogroup A / serotype 4A (strain DSM 15465 / Z2491).